The chain runs to 270 residues: Formamidopyrimidine-DNA glycosylase (270 aa).

Pro-2 serves as the catalytic Schiff-base intermediate with DNA. The Proton donor role is filled by Glu-3. Lys-58 acts as the Proton donor; for beta-elimination activity in catalysis. DNA is bound by residues His-91, Arg-110, and Arg-151. The FPG-type zinc-finger motif lies at 236–270 (FVYGRGGEFCKSCGSTLREIRLGQRASVYCSRCQR). Arg-260 acts as the Proton donor; for delta-elimination activity in catalysis.

Belongs to the FPG family. Monomer. Zn(2+) serves as cofactor.

It catalyses the reaction Hydrolysis of DNA containing ring-opened 7-methylguanine residues, releasing 2,6-diamino-4-hydroxy-5-(N-methyl)formamidopyrimidine.. It carries out the reaction 2'-deoxyribonucleotide-(2'-deoxyribose 5'-phosphate)-2'-deoxyribonucleotide-DNA = a 3'-end 2'-deoxyribonucleotide-(2,3-dehydro-2,3-deoxyribose 5'-phosphate)-DNA + a 5'-end 5'-phospho-2'-deoxyribonucleoside-DNA + H(+). Involved in base excision repair of DNA damaged by oxidation or by mutagenic agents. Acts as a DNA glycosylase that recognizes and removes damaged bases. Has a preference for oxidized purines, such as 7,8-dihydro-8-oxoguanine (8-oxoG). Has AP (apurinic/apyrimidinic) lyase activity and introduces nicks in the DNA strand. Cleaves the DNA backbone by beta-delta elimination to generate a single-strand break at the site of the removed base with both 3'- and 5'-phosphates. This Stutzerimonas stutzeri (strain A1501) (Pseudomonas stutzeri) protein is Formamidopyrimidine-DNA glycosylase.